A 240-amino-acid polypeptide reads, in one-letter code: Ubiquinone biosynthesis O-methyltransferase (240 aa).

Residues Arg-36, Gly-66, Asp-87, and Met-129 each coordinate S-adenosyl-L-methionine.

The protein belongs to the methyltransferase superfamily. UbiG/COQ3 family.

It carries out the reaction a 3-demethylubiquinol + S-adenosyl-L-methionine = a ubiquinol + S-adenosyl-L-homocysteine + H(+). The enzyme catalyses a 3-(all-trans-polyprenyl)benzene-1,2-diol + S-adenosyl-L-methionine = a 2-methoxy-6-(all-trans-polyprenyl)phenol + S-adenosyl-L-homocysteine + H(+). Its pathway is cofactor biosynthesis; ubiquinone biosynthesis. Functionally, O-methyltransferase that catalyzes the 2 O-methylation steps in the ubiquinone biosynthetic pathway. This is Ubiquinone biosynthesis O-methyltransferase from Pelagibacter ubique (strain HTCC1062).